The following is a 379-amino-acid chain: MSQSGADPEQRQQASEADAMAATFRASEHQHIRYNPLQDEWVLVSAHRMKRPWQGQVEPQLLKTVPRHDPLNPLCPGATRANGEVNPPYDGTFLFDNDFPALQPDAPDPGPSDHPLFRVEAARGVCKVMCFHPWSDVTLPLMSVPEIRAVIDAWASVTEELGAQYPWVQIFENKGAMMGCSNPHPHCQVWASNFLPDIAQREERSQQTYHNQHGKPLLLEYGHQELLRKERLVLTSEYWIVLVPFWAVWPFQTLLLPRRHVQRLPELTPAERDDLASTMKKLLTKYDNLFETSFPYSMGWHGAPMGLKTGATCDHWQLHAHYYPPLLRSATVRKFMVGYEMLAQAQRDLTPEQAAERLRVLPEVHYCLTQKDKETAATA.

Polar residues predominate over residues 1-15 (MSQSGADPEQRQQAS). The segment at 1-20 (MSQSGADPEQRQQASEADAM) is disordered. Position 75 (Cys75) interacts with Zn(2+). UDP-alpha-D-glucose-binding positions include Ala81, 97 to 98 (ND), and Asn173. His184 serves as a coordination point for Zn(2+). Residue His186 is the Tele-UMP-histidine intermediate of the active site. Gln188 lines the UDP-alpha-D-glucose pocket. Glu202, His301, His319, and His321 together coordinate Zn(2+). UDP-alpha-D-glucose-binding positions include 334 to 337 (KFMV) and 339 to 340 (YE).

The protein belongs to the galactose-1-phosphate uridylyltransferase type 1 family. In terms of assembly, homodimer. Zn(2+) serves as cofactor.

The enzyme catalyses alpha-D-galactose 1-phosphate + UDP-alpha-D-glucose = alpha-D-glucose 1-phosphate + UDP-alpha-D-galactose. It participates in carbohydrate metabolism; galactose metabolism. Functionally, plays an important role in galactose metabolism. The polypeptide is Galactose-1-phosphate uridylyltransferase (Galt) (Rattus norvegicus (Rat)).